A 204-amino-acid polypeptide reads, in one-letter code: Ciliary microtubule inner protein 7 (204 aa).

The protein resides in the cell projection. The protein localises to the cilium. This chain is Ciliary microtubule inner protein 7, found in Homo sapiens (Human).